A 625-amino-acid polypeptide reads, in one-letter code: Putative surface protein bspA-like (625 aa).

The Extracellular portion of the chain corresponds to 1–548 (MMTPGKSSKT…KAIKGGEIAG (548 aa)). Asn15 is a glycosylation site (N-linked (GlcNAc...) asparagine). LRR repeat units lie at residues 38–60 (CSSF…AFTG), 61–83 (CSSL…AFSE), 85–106 (SSIT…AFSG), 107–129 (CSKL…AFRG), 153–175 (CSSL…AFYG), 176–198 (CSSL…AFQE), 200–221 (SKLT…AFKR), 222–245 (CSSL…FYEC), 247–267 (KLTS…AFSK), 271–293 (LTSI…VFLN), 325–347 (IPKS…TLTH), 348–368 (FTNL…PESF), and 369–392 (IEGD…AFKD). N-linked (GlcNAc...) asparagine glycosylation is present at Asn227. The tract at residues 439 to 538 (KQSEENPNQP…TDDPSKSKEN (100 aa)) is disordered. Residues 443–526 (ENPNQPGENP…QPGENPSQPG (84 aa)) are compositionally biased toward low complexity. Residues 549 to 571 (IIIGSLIGICLVVAICFGVYYYF) form a helical membrane-spanning segment. Topologically, residues 572–625 (MRIKPKNKNDDNEGNQEDTIANGTNEVTNENVLATFDEQPNNESDSNGLDSAEV) are cytoplasmic. The tract at residues 577–625 (KNKNDDNEGNQEDTIANGTNEVTNENVLATFDEQPNNESDSNGLDSAEV) is disordered. Positions 588–625 (EDTIANGTNEVTNENVLATFDEQPNNESDSNGLDSAEV) are enriched in polar residues.

The protein resides in the cell membrane. May bind host tissue. The polypeptide is Putative surface protein bspA-like (BSPAL1) (Trichomonas vaginalis).